Here is a 451-residue protein sequence, read N- to C-terminus: Glycine--tRNA ligase (451 aa).

Residues Arg-94 and Glu-164 each coordinate substrate. Residues 196 to 198, 206 to 211, 281 to 282, and 325 to 328 contribute to the ATP site; these read RNE, FRTREF, EL, and GVER. 211-215 serves as a coordination point for substrate; the sequence is FEQME. Residue 321–325 coordinates substrate; that stretch reads EPSVG.

Belongs to the class-II aminoacyl-tRNA synthetase family. Homodimer.

It is found in the cytoplasm. It carries out the reaction tRNA(Gly) + glycine + ATP = glycyl-tRNA(Gly) + AMP + diphosphate. Functionally, catalyzes the attachment of glycine to tRNA(Gly). The sequence is that of Glycine--tRNA ligase from Mesoplasma florum (strain ATCC 33453 / NBRC 100688 / NCTC 11704 / L1) (Acholeplasma florum).